The primary structure comprises 201 residues: 3-isopropylmalate dehydratase small subunit (201 aa).

Belongs to the LeuD family. LeuD type 1 subfamily. As to quaternary structure, heterodimer of LeuC and LeuD.

It carries out the reaction (2R,3S)-3-isopropylmalate = (2S)-2-isopropylmalate. It functions in the pathway amino-acid biosynthesis; L-leucine biosynthesis; L-leucine from 3-methyl-2-oxobutanoate: step 2/4. Functionally, catalyzes the isomerization between 2-isopropylmalate and 3-isopropylmalate, via the formation of 2-isopropylmaleate. The protein is 3-isopropylmalate dehydratase small subunit of Cereibacter sphaeroides (strain KD131 / KCTC 12085) (Rhodobacter sphaeroides).